Reading from the N-terminus, the 637-residue chain is Chaperone protein HtpG (637 aa).

Residues 1 to 345 (MSQQETHGFQ…SNDLPLNVSR (345 aa)) form an a; substrate-binding region. The tract at residues 346 to 562 (EILQDNHITK…EGEMSSQMIK (217 aa)) is b. The segment at 563-637 (LMQAAGQPVP…MNQMLLANLK (75 aa)) is c.

The protein belongs to the heat shock protein 90 family. Homodimer.

The protein resides in the cytoplasm. Its function is as follows. Molecular chaperone. Has ATPase activity. The chain is Chaperone protein HtpG from Shewanella sp. (strain ANA-3).